We begin with the raw amino-acid sequence, 147 residues long: UPF0735 ACT domain-containing protein Cthe_1377 (147 aa).

Residues 71 to 146 (TLFFTVEDYA…GVKRQEILAR (76 aa)) enclose the ACT domain.

This sequence belongs to the UPF0735 family.

This chain is UPF0735 ACT domain-containing protein Cthe_1377, found in Acetivibrio thermocellus (strain ATCC 27405 / DSM 1237 / JCM 9322 / NBRC 103400 / NCIMB 10682 / NRRL B-4536 / VPI 7372) (Clostridium thermocellum).